The chain runs to 526 residues: Phosphoenolpyruvate carboxylase (526 aa).

It belongs to the PEPCase type 2 family. In terms of assembly, homotetramer. It depends on Mg(2+) as a cofactor.

It carries out the reaction oxaloacetate + phosphate = phosphoenolpyruvate + hydrogencarbonate. Functionally, catalyzes the irreversible beta-carboxylation of phosphoenolpyruvate (PEP) to form oxaloacetate (OAA), a four-carbon dicarboxylic acid source for the tricarboxylic acid cycle. The protein is Phosphoenolpyruvate carboxylase of Methanosarcina mazei (strain ATCC BAA-159 / DSM 3647 / Goe1 / Go1 / JCM 11833 / OCM 88) (Methanosarcina frisia).